The primary structure comprises 100 residues: Conantokin-G (100 aa).

The N-terminal stretch at 1 to 21 (MHLYTYLYLLVPLVTFHLILG) is a signal peptide. Residues 22 to 80 (TGTLDDGGALTERRSADATALKAEPVLLQKSAARSTDDNGKDRLTQMKRILKQRGNKAR) constitute a propeptide that is removed on maturation. The interval 52–100 (SAARSTDDNGKDRLTQMKRILKQRGNKARGEEELQENQELIREKSNGKR) is disordered. Over residues 56 to 66 (STDDNGKDRLT) the composition is skewed to basic and acidic residues. Residues 61 to 80 (GKDRLTQMKRILKQRGNKAR) are gamma-carboxylation recognition sequence that plays a role in the conversion of Glu to carboxy-Glu (Gla). A divalent metal cation is bound at residue Glu83. 4-carboxyglutamate is present on residues Glu83, Glu84, Glu87, Glu90, and Glu94. A divalent metal cation contacts are provided by Glu87, Glu90, and Glu94. The span at 90–100 (ELIREKSNGKR) shows a compositional bias: basic and acidic residues. At Asn97 the chain carries Asparagine amide.

The protein belongs to the conotoxin B superfamily. Ca(2+) serves as cofactor. The cofactor is Mg(2+). As to expression, expressed by the venom duct.

It is found in the secreted. In terms of biological role, conantokins inhibit N-methyl-D-aspartate (NMDA) receptors. This toxin is selective for the NR2B/GRIN2B subunit. Induces sleep-like symptoms in young mice and hyperactivity in older mice. The protein is Conantokin-G of Conus geographus (Geography cone).